Reading from the N-terminus, the 394-residue chain is Aspergillopepsin-1 (394 aa).

A signal peptide spans 1-20; sequence MVVFSKTAALVLGLSTAVSA. Positions 21–69 are cleaved as a propeptide — activation peptide; the sequence is APAPTRKGFTINQIARPANKTRTVNLPGLYARSLAKFGGTVPQSVKEAA. The region spanning 85–391 is the Peptidase A1 domain; sequence YLTPVTVGKS…NSEGPKLGFA (307 aa). Catalysis depends on residues aspartate 101 and aspartate 283. Cysteine 319 and cysteine 354 are disulfide-bonded.

Belongs to the peptidase A1 family.

Its subcellular location is the secreted. It catalyses the reaction Hydrolysis of proteins with broad specificity. Generally favors hydrophobic residues in P1 and P1', but also accepts Lys in P1, which leads to activation of trypsinogen. Does not clot milk.. In terms of biological role, secreted aspartic endopeptidase that allows assimilation of proteinaceous substrates. The scissile peptide bond is attacked by a nucleophilic water molecule activated by two aspartic residues in the active site. Shows a broad primary substrate specificity. Favors hydrophobic residues at the P1 and P1' positions, but also accepts a lysine residue in the P1 position, leading to the activation of trypsinogen and chymotrypsinogen A. This Aspergillus niger protein is Aspergillopepsin-1.